The primary structure comprises 307 residues: Oxygen-dependent coproporphyrinogen-III oxidase (307 aa).

Ser-99 is a substrate binding site. Residues His-103 and His-113 each coordinate a divalent metal cation. His-113 (proton donor) is an active-site residue. A substrate-binding site is contributed by 115–117 (NVR). Residues His-152 and His-182 each contribute to the a divalent metal cation site. Positions 247 to 282 (YVEFNLVFDRGTLFGLQSGGRTESILMSMPPVANWR) are important for dimerization. 265–267 (GGR) lines the substrate pocket.

It belongs to the aerobic coproporphyrinogen-III oxidase family. Homodimer. A divalent metal cation serves as cofactor.

Its subcellular location is the cytoplasm. The enzyme catalyses coproporphyrinogen III + O2 + 2 H(+) = protoporphyrinogen IX + 2 CO2 + 2 H2O. It participates in porphyrin-containing compound metabolism; protoporphyrin-IX biosynthesis; protoporphyrinogen-IX from coproporphyrinogen-III (O2 route): step 1/1. Its function is as follows. Involved in the heme biosynthesis. Catalyzes the aerobic oxidative decarboxylation of propionate groups of rings A and B of coproporphyrinogen-III to yield the vinyl groups in protoporphyrinogen-IX. In Burkholderia orbicola (strain MC0-3), this protein is Oxygen-dependent coproporphyrinogen-III oxidase.